We begin with the raw amino-acid sequence, 412 residues long: Diphosphomevalonate decarboxylase MVD1, peroxisomal (412 aa).

Residue 23–26 (YWGK) participates in (R)-5-diphosphomevalonate binding. The short motif at 40–48 (SVTLDPDHL) is the Peroxisomal targeting signal PTS2 element. (R)-5-diphosphomevalonate contacts are provided by residues R78, 161–166 (SGSACR), and T217.

This sequence belongs to the diphosphomevalonate decarboxylase family. Homodimer.

Its subcellular location is the peroxisome. It catalyses the reaction (R)-5-diphosphomevalonate + ATP = isopentenyl diphosphate + ADP + phosphate + CO2. It functions in the pathway isoprenoid biosynthesis; isopentenyl diphosphate biosynthesis via mevalonate pathway; isopentenyl diphosphate from (R)-mevalonate: step 3/3. Functionally, performs the first committed step in the biosynthesis of isoprene-containing compounds such as sterols and terpenoids. Is specific for (R)-5-diphosphomevalonate (MVAPP). The catalytic efficiency with (R)-5-phosphomevalonate (MVAP) as substrate is 10000-fold lower than for MVAPP. Can complement a yeast mutant defective in MVD activity. This is Diphosphomevalonate decarboxylase MVD1, peroxisomal from Arabidopsis thaliana (Mouse-ear cress).